We begin with the raw amino-acid sequence, 281 residues long: Ribosomal RNA small subunit methyltransferase A (281 aa).

6 residues coordinate S-adenosyl-L-methionine: Asn-18, Leu-20, Gly-45, Glu-66, Asp-91, and Asn-118.

This sequence belongs to the class I-like SAM-binding methyltransferase superfamily. rRNA adenine N(6)-methyltransferase family. RsmA subfamily.

The protein localises to the cytoplasm. It carries out the reaction adenosine(1518)/adenosine(1519) in 16S rRNA + 4 S-adenosyl-L-methionine = N(6)-dimethyladenosine(1518)/N(6)-dimethyladenosine(1519) in 16S rRNA + 4 S-adenosyl-L-homocysteine + 4 H(+). Functionally, specifically dimethylates two adjacent adenosines (A1518 and A1519) in the loop of a conserved hairpin near the 3'-end of 16S rRNA in the 30S particle. May play a critical role in biogenesis of 30S subunits. The polypeptide is Ribosomal RNA small subunit methyltransferase A (Histophilus somni (strain 129Pt) (Haemophilus somnus)).